A 595-amino-acid polypeptide reads, in one-letter code: Epsin-2 (595 aa).

A 1,2-diacyl-sn-glycero-3-phospho-(1D-myo-inositol-4,5-bisphosphate) contacts are provided by Arg-8, Lys-11, Arg-25, Asn-30, Arg-63, and His-73. An ENTH domain is found at 12–144 (NIVNNYSEAE…KDEERLKVER (133 aa)). The span at 164-183 (NQITFGRGSSQPNLSTSYSE) shows a compositional bias: polar residues. 4 disordered regions span residues 164 to 254 (NQIT…RLRR), 267 to 289 (SRRD…PGSH), 305 to 396 (SGPV…KPSS), and 423 to 469 (TSKK…PESF). Arg-170 carries the post-translational modification Omega-N-methylarginine. Phosphoserine is present on residues Ser-173, Ser-192, and Ser-195. Polar residues-rich tracts occupy residues 197-216 (HGST…PQTS) and 235-245 (EQSSESVQTAR). UIM domains follow at residues 218-237 (EEEL…AEQS) and 255-274 (GDDL…TVKV). Positions 306–337 (GPVTQKTEPWSAGASANQTNPWGGTVAPSNIT) are enriched in polar residues. Repeat copies occupy residues 313–315 (EPW), 325–327 (NPW), 338–340 (DPW), and 352–354 (DPW). A 6 X 3 AA repeats of [DE]-P-W region spans residues 313–389 (EPWSAGASAN…SNAGKTTDAW (77 aa)). The segment covering 358–367 (TTASTQSVPK) has biased composition (polar residues). Repeat unit 5 spans residues 370 to 372 (DPW). Over residues 374–384 (ASQQPASNAGK) the composition is skewed to polar residues. Repeat unit 6 spans residues 387–389 (DAW). Phosphoserine is present on Ser-443. Low complexity predominate over residues 449–460 (SQSLTSASSKPS). A Phosphothreonine modification is found at Thr-465. 2 repeat units span residues 494-496 (NPF) and 508-510 (NPF). Residues 494 to 593 (NPFLAPGAAA…AQSTGTTNPF (100 aa)) form a 3 X 3 AA repeats of N-P-F region. Phosphoserine is present on Ser-526. Repeat unit 3 spans residues 591–593 (NPF).

The protein belongs to the epsin family. In terms of assembly, binds EPS15, AP-2 and clathrin. Interacts with UBQLN2. Interacts with ITSN1. Post-translationally, ubiquitinated.

It is found in the cytoplasm. In terms of biological role, plays a role in the formation of clathrin-coated invaginations and endocytosis. This Mus musculus (Mouse) protein is Epsin-2 (Epn2).